Here is a 366-residue protein sequence, read N- to C-terminus: tRNA/tmRNA (uracil-C(5))-methyltransferase (366 aa).

Positions 190, 218, 223, 239, and 299 each coordinate S-adenosyl-L-methionine. Cys-324 acts as the Nucleophile in catalysis. The active-site Proton acceptor is the Glu-358.

It belongs to the class I-like SAM-binding methyltransferase superfamily. RNA M5U methyltransferase family. TrmA subfamily.

It carries out the reaction uridine(54) in tRNA + S-adenosyl-L-methionine = 5-methyluridine(54) in tRNA + S-adenosyl-L-homocysteine + H(+). The enzyme catalyses uridine(341) in tmRNA + S-adenosyl-L-methionine = 5-methyluridine(341) in tmRNA + S-adenosyl-L-homocysteine + H(+). Dual-specificity methyltransferase that catalyzes the formation of 5-methyluridine at position 54 (m5U54) in all tRNAs, and that of position 341 (m5U341) in tmRNA (transfer-mRNA). In Edwardsiella ictaluri (strain 93-146), this protein is tRNA/tmRNA (uracil-C(5))-methyltransferase.